A 204-amino-acid chain; its full sequence is MSNFTAKVPLSERMADVLISKDRWKDDEEGYLKVKYGLEIILINVMKFALVYGIALVTGLLLQTVTVHLSYLWLRRYSFGLHATKTLNCTLISLMMFVLAPFVFQNVPSNNWIVLGTFAFILLNMFLFAPADTESLPLIGEEHRKTLKRKAMIGTLILTGIALLIPFAEMKTLIMIGSLFQVISINPLTYKLLRRRYRNYEKYE.

A run of 4 helical transmembrane segments spans residues 52 to 74 (YGIA…YLWL), 87 to 107 (LNCT…FQNV), 111 to 131 (NWIV…FAPA), and 156 to 176 (LILT…LIMI).

It belongs to the AgrB family.

The protein localises to the cell membrane. Its function is as follows. May be involved in the proteolytic processing of a quorum sensing system signal molecule precursor. The chain is Putative AgrB-like protein from Listeria monocytogenes serotype 4a (strain HCC23).